The primary structure comprises 350 residues: NADH-cytochrome b5 reductase 2 (350 aa).

The helical transmembrane segment at 43 to 63 threads the bilayer; the sequence is PLVLALGGVAGIGAWYGLGGF. The FAD-binding FR-type domain maps to 96–204; that stretch reads DQFVEFTLKE…KGPIAKFAYK (109 aa). FAD is bound at residue 207 to 242; sequence EFESIGMIAGGSGITPMYQVIQDIASNPSDKTKVTL.

The protein belongs to the flavoprotein pyridine nucleotide cytochrome reductase family. FAD serves as cofactor.

It localises to the mitochondrion outer membrane. The catalysed reaction is 2 Fe(III)-[cytochrome b5] + NADH = 2 Fe(II)-[cytochrome b5] + NAD(+) + H(+). May mediate the reduction of outer membrane cytochrome b5. The chain is NADH-cytochrome b5 reductase 2 (MCR1) from Mycosarcoma maydis (Corn smut fungus).